A 265-amino-acid chain; its full sequence is Indole-3-glycerol phosphate synthase (265 aa).

This sequence belongs to the TrpC family.

It catalyses the reaction 1-(2-carboxyphenylamino)-1-deoxy-D-ribulose 5-phosphate + H(+) = (1S,2R)-1-C-(indol-3-yl)glycerol 3-phosphate + CO2 + H2O. Its pathway is amino-acid biosynthesis; L-tryptophan biosynthesis; L-tryptophan from chorismate: step 4/5. This chain is Indole-3-glycerol phosphate synthase, found in Xanthomonas oryzae pv. oryzae (strain PXO99A).